The primary structure comprises 95 residues: Large ribosomal subunit protein bL25 (95 aa).

It belongs to the bacterial ribosomal protein bL25 family. As to quaternary structure, part of the 50S ribosomal subunit; part of the 5S rRNA/L5/L18/L25 subcomplex. Contacts the 5S rRNA. Binds to the 5S rRNA independently of L5 and L18.

This is one of the proteins that binds to the 5S RNA in the ribosome where it forms part of the central protuberance. The protein is Large ribosomal subunit protein bL25 of Haemophilus ducreyi (strain 35000HP / ATCC 700724).